The sequence spans 165 residues: V-type proton ATPase 16 kDa proteolipid subunit (165 aa).

Topologically, residues 1–12 are lumenal; the sequence is MSTVFNGDETAP. The chain crosses the membrane as a helical span at residues 13 to 33; that stretch reads FFGFLGAAAALVFSCMGAAYG. The Cytoplasmic portion of the chain corresponds to 34 to 55; sequence TAKSGVGVASMGVMRPELVMKS. Residues 56–76 form a helical membrane-spanning segment; the sequence is IVPVVMAGVLGIYGLIIAVII. Residues 77 to 95 are Lumenal-facing; the sequence is STGINPKAKSYYLFDGYAH. The helical transmembrane segment at 96-117 threads the bilayer; the sequence is LSSGLACGLAGLSAGMAIGIVG. Residues 118–129 lie on the Cytoplasmic side of the membrane; sequence DAGVRANAQQPK. Residues 130 to 155 traverse the membrane as a helical segment; that stretch reads LFVGMILILIFAEALALYGLIVGIIL. Residues 156 to 165 lie on the Lumenal side of the membrane; sequence SSRAGQSRAD.

The protein belongs to the V-ATPase proteolipid subunit family. In terms of assembly, V-ATPase is a heteromultimeric enzyme composed of a peripheral catalytic V1 complex (main components: subunits A, B, C, D, E, and F) attached to an integral membrane V0 proton pore complex (main component: the proteolipid protein; which is present as a hexamer that forms the proton-conducting pore).

The protein resides in the vacuole membrane. Its function is as follows. Proton-conducting pore forming subunit of the membrane integral V0 complex of vacuolar ATPase. V-ATPase is responsible for acidifying a variety of intracellular compartments in eukaryotic cells. The polypeptide is V-type proton ATPase 16 kDa proteolipid subunit (VMAC1) (Mesembryanthemum crystallinum (Common ice plant)).